Here is a 175-residue protein sequence, read N- to C-terminus: Large ribosomal subunit protein bL17 (175 aa).

The segment at 127-175 (GEAEAATKRAVKEDALKKDEAPAAESVEDAKPAEDAPAAEAADDKGKDA) is disordered. Basic and acidic residues predominate over residues 131-147 (AATKRAVKEDALKKDEA).

Belongs to the bacterial ribosomal protein bL17 family. In terms of assembly, part of the 50S ribosomal subunit. Contacts protein L32.

The sequence is that of Large ribosomal subunit protein bL17 from Streptomyces griseus subsp. griseus (strain JCM 4626 / CBS 651.72 / NBRC 13350 / KCC S-0626 / ISP 5235).